Reading from the N-terminus, the 106-residue chain is Large ribosomal subunit protein uL24 (106 aa).

Positions 1 to 20 (MNKRAKSKNREPLRKSPVKR) are disordered. The span at 8-20 (KNREPLRKSPVKR) shows a compositional bias: basic and acidic residues.

It belongs to the universal ribosomal protein uL24 family. As to quaternary structure, part of the 50S ribosomal subunit.

In terms of biological role, one of two assembly initiator proteins, it binds directly to the 5'-end of the 23S rRNA, where it nucleates assembly of the 50S subunit. One of the proteins that surrounds the polypeptide exit tunnel on the outside of the subunit. This is Large ribosomal subunit protein uL24 from Methylacidiphilum infernorum (isolate V4) (Methylokorus infernorum (strain V4)).